The following is a 390-amino-acid chain: MDTHIIEEGLVKIEVPDFEKVSAKAPVFYNPVMEMNRDISVAVINQYRKEVDHDISICDAFGGTGIRGARYSKEIHGVEKVVVGDVNPLAVEISKKNMQLNNISNVEVQKNDANILLQSNKGLFDVVDIDPFGTPAMFTQSTAANIRPGGLICISATDTSALCGTYHDPCLRKYGAKPLKTEYCHENGIRILIAFISRNLAVNQKYLHVLFSHSTEHYMRVYAIVKRGGKKTNKALDNIGFIAHCPNCLHRETTYGFAPKIPHTCPECGGEYDVAGPLWLGKIWDKEFIYNTMELVKNLNLNKKDDLMSLFEKCYMEADGPVTFYDIHKICKKLKISSPKINDVMDEIRNRGYFISRTHFKLTGMRTDMPLDELKQLILDIKEDKLGPEK.

The 375-residue stretch at 4–378 (HIIEEGLVKI…MPLDELKQLI (375 aa)) folds into the Trm1 methyltransferase domain. 5 residues coordinate S-adenosyl-L-methionine: arginine 37, arginine 67, aspartate 85, aspartate 112, and alanine 113. Zn(2+) contacts are provided by cysteine 245, cysteine 248, cysteine 265, and cysteine 268.

Belongs to the class I-like SAM-binding methyltransferase superfamily. Trm1 family.

The enzyme catalyses guanosine(26) in tRNA + 2 S-adenosyl-L-methionine = N(2)-dimethylguanosine(26) in tRNA + 2 S-adenosyl-L-homocysteine + 2 H(+). In terms of biological role, dimethylates a single guanine residue at position 26 of a number of tRNAs using S-adenosyl-L-methionine as donor of the methyl groups. The chain is tRNA (guanine(26)-N(2))-dimethyltransferase from Methanosphaera stadtmanae (strain ATCC 43021 / DSM 3091 / JCM 11832 / MCB-3).